Consider the following 398-residue polypeptide: Succinate--CoA ligase [ADP-forming] subunit beta (398 aa).

Residues 9–253 (MALLNERGVS…AGASDPLEQE (245 aa)) enclose the ATP-grasp domain. Residues Lys46, 53 to 55 (GRG), Val111, and Glu116 each bind ATP. Residues Asn208 and Asp222 each contribute to the Mg(2+) site. Substrate is bound by residues Asn273 and 330-332 (GIM).

The protein belongs to the succinate/malate CoA ligase beta subunit family. As to quaternary structure, heterotetramer of two alpha and two beta subunits. It depends on Mg(2+) as a cofactor.

The enzyme catalyses succinate + ATP + CoA = succinyl-CoA + ADP + phosphate. It carries out the reaction GTP + succinate + CoA = succinyl-CoA + GDP + phosphate. It functions in the pathway carbohydrate metabolism; tricarboxylic acid cycle; succinate from succinyl-CoA (ligase route): step 1/1. Succinyl-CoA synthetase functions in the citric acid cycle (TCA), coupling the hydrolysis of succinyl-CoA to the synthesis of either ATP or GTP and thus represents the only step of substrate-level phosphorylation in the TCA. The beta subunit provides nucleotide specificity of the enzyme and binds the substrate succinate, while the binding sites for coenzyme A and phosphate are found in the alpha subunit. In Zymomonas mobilis subsp. mobilis (strain ATCC 31821 / ZM4 / CP4), this protein is Succinate--CoA ligase [ADP-forming] subunit beta.